Consider the following 318-residue polypeptide: Porphobilinogen deaminase (318 aa).

Position 241 is an S-(dipyrrolylmethanemethyl)cysteine (cysteine 241).

Belongs to the HMBS family. In terms of assembly, monomer. It depends on dipyrromethane as a cofactor.

The catalysed reaction is 4 porphobilinogen + H2O = hydroxymethylbilane + 4 NH4(+). The protein operates within porphyrin-containing compound metabolism; protoporphyrin-IX biosynthesis; coproporphyrinogen-III from 5-aminolevulinate: step 2/4. Its function is as follows. Tetrapolymerization of the monopyrrole PBG into the hydroxymethylbilane pre-uroporphyrinogen in several discrete steps. The chain is Porphobilinogen deaminase from Geobacter metallireducens (strain ATCC 53774 / DSM 7210 / GS-15).